Reading from the N-terminus, the 118-residue chain is Small ribosomal subunit protein uS13 (118 aa).

Residues 94-118 (SLPLRGQRTKTNARTRKGPRKPIKK) are disordered.

It belongs to the universal ribosomal protein uS13 family. As to quaternary structure, part of the 30S ribosomal subunit. Forms a loose heterodimer with protein S19. Forms two bridges to the 50S subunit in the 70S ribosome.

Its function is as follows. Located at the top of the head of the 30S subunit, it contacts several helices of the 16S rRNA. In the 70S ribosome it contacts the 23S rRNA (bridge B1a) and protein L5 of the 50S subunit (bridge B1b), connecting the 2 subunits; these bridges are implicated in subunit movement. Contacts the tRNAs in the A and P-sites. This is Small ribosomal subunit protein uS13 from Shewanella oneidensis (strain ATCC 700550 / JCM 31522 / CIP 106686 / LMG 19005 / NCIMB 14063 / MR-1).